We begin with the raw amino-acid sequence, 310 residues long: Probable manganese-dependent inorganic pyrophosphatase (310 aa).

Residues His9, Asp13, Asp15, Asp75, His97, and Asp149 each coordinate Mn(2+).

This sequence belongs to the PPase class C family. Requires Mn(2+) as cofactor.

Its subcellular location is the cytoplasm. The catalysed reaction is diphosphate + H2O = 2 phosphate + H(+). This chain is Probable manganese-dependent inorganic pyrophosphatase, found in Brevibacillus brevis (strain 47 / JCM 6285 / NBRC 100599).